The chain runs to 87 residues: Large ribosomal subunit protein bL31B (87 aa).

It belongs to the bacterial ribosomal protein bL31 family. Type B subfamily. Part of the 50S ribosomal subunit.

This is Large ribosomal subunit protein bL31B from Ralstonia nicotianae (strain ATCC BAA-1114 / GMI1000) (Ralstonia solanacearum).